Consider the following 533-residue polypeptide: Flavin-containing monooxygenase 5 (533 aa).

The residue at position 5 (R5) is a Dimethylated arginine. Residues 10 to 14 (GGGVS), E33, and 41 to 42 (LW) each bind FAD. A Phosphoserine modification is found at S54. Y56 carries the post-translational modification Phosphotyrosine. S58 bears the Phosphoserine mark. 62–63 (NT) serves as a coordination point for FAD. 196–199 (SGGD) contacts NADP(+). Phosphoserine is present on S280. The residue at position 284 (T284) is a Phosphothreonine. Residue S401 is modified to Phosphoserine. Residues 513–533 (TMTIGKFMLALAFFAIIIAYF) traverse the membrane as a helical segment.

Belongs to the FMO family. FAD is required as a cofactor. Expressed in fetal and adult liver.

The protein resides in the microsome membrane. Its subcellular location is the endoplasmic reticulum membrane. The catalysed reaction is N,N-dimethylaniline + NADPH + O2 + H(+) = N,N-dimethylaniline N-oxide + NADP(+) + H2O. The enzyme catalyses NADPH + O2 + H(+) = H2O2 + NADP(+). It catalyses the reaction heptan-2-one + NADPH + O2 + H(+) = pentyl acetate + NADP(+) + H2O. It carries out the reaction octan-3-one + NADPH + O2 + H(+) = pentyl propanoate + NADP(+) + H2O. The catalysed reaction is octan-3-one + NADPH + O2 + H(+) = ethyl hexanoate + NADP(+) + H2O. The enzyme catalyses hexan-3-one + NADPH + O2 + H(+) = ethyl butanoate + NADP(+) + H2O. It catalyses the reaction hexan-3-one + NADPH + O2 + H(+) = propyl propanoate + NADP(+) + H2O. It carries out the reaction heptan-4-one + NADPH + O2 + H(+) = propyl butanoate + NADP(+) + H2O. The catalysed reaction is (2E)-geranial + NADPH + O2 + H(+) = (1E)-2,6-dimethylhepta-1,5-dien-1-yl formate + NADP(+) + H2O. The enzyme catalyses sulcatone + NADPH + O2 + H(+) = 4-methylpent-3-en-1-yl acetate + NADP(+) + H2O. Its function is as follows. Acts as a Baeyer-Villiger monooxygenase on a broad range of substrates. Catalyzes the insertion of an oxygen atom into a carbon-carbon bond adjacent to a carbonyl, which converts ketones to esters. Active on diverse carbonyl compounds, whereas soft nucleophiles are mostly non- or poorly reactive. In contrast with other forms of FMO it is non- or poorly active on 'classical' substrates such as drugs, pesticides, and dietary components containing soft nucleophilic heteroatoms. Able to oxidize drug molecules bearing a carbonyl group on an aliphatic chain, such as nabumetone and pentoxifylline. Also, in the absence of substrates, shows slow but yet significant NADPH oxidase activity. Acts as a positive modulator of cholesterol biosynthesis as well as glucose homeostasis, promoting metabolic aging via pleiotropic effects. In Homo sapiens (Human), this protein is Flavin-containing monooxygenase 5.